A 320-amino-acid chain; its full sequence is MGRKKIALIGAGNIGGTLALLAAQKELGDVVLFDVVEGVPQGKALDLSQVGPIAGFDAKISGSNDYADIAGADVIIVTAGVARKPGMSRDDLLGINLKVMKAVGEGIKANAPDAFVICITNPLDAMVWALREFSGLPHSKVVGMAGVLDSARFSHFIADEFDVSVKDVNTFVLGGHGDTMVPVVRYSTVNGIPVPDLVKMGLSSQDKIDAIVKRTRGGGGEIVALLGTGSAFYAPAASGIAMAEAYLGDQKRILPCAAYVDGQYGVDGLYVGVPVMIGAGGVEKIVEIELDDADKAGLQVSVDAVKELLEACKKLDPSLA.

Residues 10 to 15 and D34 contribute to the NAD(+) site; that span reads GAGNIG. Residues R83 and R89 each contribute to the substrate site. NAD(+)-binding positions include N96 and 119–121; that span reads ITN. Substrate is bound by residues N121 and R152. H176 acts as the Proton acceptor in catalysis.

This sequence belongs to the LDH/MDH superfamily. MDH type 3 family.

It carries out the reaction (S)-malate + NAD(+) = oxaloacetate + NADH + H(+). Catalyzes the reversible oxidation of malate to oxaloacetate. The sequence is that of Malate dehydrogenase from Sphingopyxis alaskensis (strain DSM 13593 / LMG 18877 / RB2256) (Sphingomonas alaskensis).